Consider the following 88-residue polypeptide: Apolipoprotein C-I (88 aa).

The N-terminal stretch at 1-26 (MRLFLSLPVWVAVLAMVLEGPAPAQA) is a signal peptide.

This sequence belongs to the apolipoprotein C1 family.

Its subcellular location is the secreted. Functionally, inhibitor of lipoprotein binding to the low density lipoprotein (LDL) receptor, LDL receptor-related protein, and very low density lipoprotein (VLDL) receptor. Associates with high density lipoproteins (HDL) and the triacylglycerol-rich lipoproteins in the plasma and makes up about 10% of the protein of the VLDL and 2% of that of HDL. Appears to interfere directly with fatty acid uptake and is also the major plasma inhibitor of cholesteryl ester transfer protein (CETP). Binds free fatty acids and reduces their intracellular esterification. Modulates the interaction of APOE with beta-migrating VLDL and inhibits binding of beta-VLDL to the LDL receptor-related protein. This is Apolipoprotein C-I (APOC1) from Ursus maritimus (Polar bear).